Here is a 384-residue protein sequence, read N- to C-terminus: Gastrin-releasing peptide receptor (384 aa).

The Extracellular portion of the chain corresponds to 1–38; it reads MALNDCFLLNLEVDHFMHCNISSHSADLPVNDDWSHPG. An N-linked (GlcNAc...) asparagine glycan is attached at N20. Residues 39–62 traverse the membrane as a helical segment; the sequence is ILYVIPAVYGVIILIGLIGNITLI. The Cytoplasmic portion of the chain corresponds to 63–76; it reads KIFCTVKSMRNVPN. The helical transmembrane segment at 77–96 threads the bilayer; the sequence is LFISSLALGDLLLLITCAPV. At 97–114 the chain is on the extracellular side; it reads DASRYLADRWLFGRIGCK. C113 and C196 are oxidised to a cystine. The helical transmembrane segment at 115–136 threads the bilayer; the sequence is LIPFIQLTSVGVSVFTLTALSA. Topologically, residues 137-152 are cytoplasmic; it reads DRYKAIVRPMDIQASH. The helical transmembrane segment at 153-174 threads the bilayer; that stretch reads ALMKICLKAAFIWIISMLLAIP. Residues 175 to 208 lie on the Extracellular side of the membrane; the sequence is EAVFSDLHPFHEESTNQTFISCAPYPHSNELHPK. A helical membrane pass occupies residues 209–234; it reads IHSMASFLVFYVIPLSIISVYYYFIA. The Cytoplasmic portion of the chain corresponds to 235–264; it reads KNLIQSAYNLPVEGNIHVKKQIESRKRLAK. Residues 265–285 form a helical membrane-spanning segment; sequence TVLVFVGLFAFCWLPNHVIYL. Residues 286 to 298 lie on the Extracellular side of the membrane; sequence YRSYHYSEVDTSM. A helical transmembrane segment spans residues 299 to 325; the sequence is LHFVTSICARLLAFTNSCVNPFALYLL. Over 326-384 the chain is Cytoplasmic; that stretch reads SKSFRKQFNTQLLCCQPGLIIRSHSTGRSTTCMTSLKSTNPSVATFSLINGNICHERYV. C339 is lipidated: S-palmitoyl cysteine. The residue at position 350 (S350) is a Phosphoserine.

This sequence belongs to the G-protein coupled receptor 1 family. Highly expressed in pancreas. Also expressed in stomach, adrenal cortex and brain. In brain, expressed in cells throughout the cortex.

The protein localises to the cell membrane. Receptor for gastrin-releasing peptide (GRP). Signals via association with G proteins that activate a phosphatidylinositol-calcium second messenger system, resulting in Akt phosphorylation. Contributes to the regulation of food intake. Contributes to the perception of prurient stimuli and transmission of itch signals in the spinal cord that promote scratching behavior, but does not play a role in the perception of pain. Contributes primarily to nonhistaminergic itch sensation. In one study, shown to act in the amygdala as part of an inhibitory network which inhibits memory specifically related to learned fear. In another study, shown to contribute to disinhibition of glutamatergic cells in the auditory cortex via signaling on vasoactive intestinal peptide-expressing cells which leads to enhanced auditory fear memories. Contributes to the induction of sighing through signaling in the pre-Botzinger complex, a cluster of several thousand neurons in the ventrolateral medulla responsible for inspiration during respiratory activity. This Homo sapiens (Human) protein is Gastrin-releasing peptide receptor (GRPR).